The sequence spans 249 residues: Uridylate kinase (249 aa).

19-22 (KLSG) contributes to the ATP binding site. Residue Gly-61 participates in UMP binding. Residues Gly-62 and Arg-66 each contribute to the ATP site. UMP contacts are provided by residues Asp-81 and 142–149 (TGNPYFTT). ATP-binding residues include Thr-169, Tyr-175, and Asp-178.

This sequence belongs to the UMP kinase family. Homohexamer.

Its subcellular location is the cytoplasm. It catalyses the reaction UMP + ATP = UDP + ADP. The protein operates within pyrimidine metabolism; CTP biosynthesis via de novo pathway; UDP from UMP (UMPK route): step 1/1. With respect to regulation, inhibited by UTP. In terms of biological role, catalyzes the reversible phosphorylation of UMP to UDP. In Anaeromyxobacter sp. (strain Fw109-5), this protein is Uridylate kinase.